Reading from the N-terminus, the 176-residue chain is Xanthine-guanine phosphoribosyltransferase (176 aa).

Residues 51–52 (RG), R88, and 111–119 (DDLVDSGKT) each bind 5-phospho-alpha-D-ribose 1-diphosphate. Position 88 (R88) interacts with GMP. Residue D112 coordinates Mg(2+). Guanine-binding residues include D115 and I158. Residues D115 and I158 each contribute to the xanthine site. GMP is bound by residues 115–119 (DSGKT) and 157–158 (WI).

This sequence belongs to the purine/pyrimidine phosphoribosyltransferase family. XGPT subfamily. As to quaternary structure, homotetramer. It depends on Mg(2+) as a cofactor.

It localises to the cell inner membrane. It carries out the reaction GMP + diphosphate = guanine + 5-phospho-alpha-D-ribose 1-diphosphate. It catalyses the reaction XMP + diphosphate = xanthine + 5-phospho-alpha-D-ribose 1-diphosphate. The catalysed reaction is IMP + diphosphate = hypoxanthine + 5-phospho-alpha-D-ribose 1-diphosphate. Its pathway is purine metabolism; GMP biosynthesis via salvage pathway; GMP from guanine: step 1/1. The protein operates within purine metabolism; XMP biosynthesis via salvage pathway; XMP from xanthine: step 1/1. In terms of biological role, purine salvage pathway enzyme that catalyzes the transfer of the ribosyl-5-phosphate group from 5-phospho-alpha-D-ribose 1-diphosphate (PRPP) to the N9 position of the 6-oxopurines guanine and xanthine to form the corresponding ribonucleotides GMP (guanosine 5'-monophosphate) and XMP (xanthosine 5'-monophosphate), with the release of PPi. To a lesser extent, also acts on hypoxanthine. This is Xanthine-guanine phosphoribosyltransferase from Roseobacter denitrificans (strain ATCC 33942 / OCh 114) (Erythrobacter sp. (strain OCh 114)).